Here is a 299-residue protein sequence, read N- to C-terminus: Urease accessory protein UreD (299 aa).

This sequence belongs to the UreD family. UreD, UreF and UreG form a complex that acts as a GTP-hydrolysis-dependent molecular chaperone, activating the urease apoprotein by helping to assemble the nickel containing metallocenter of UreC. The UreE protein probably delivers the nickel.

The protein resides in the cytoplasm. In terms of biological role, required for maturation of urease via the functional incorporation of the urease nickel metallocenter. This is Urease accessory protein UreD from Haloarcula marismortui (strain ATCC 43049 / DSM 3752 / JCM 8966 / VKM B-1809) (Halobacterium marismortui).